Here is a 192-residue protein sequence, read N- to C-terminus: Adenylate kinase (192 aa).

10 to 18 lines the ATP pocket; the sequence is GVPGVGGTT.

It belongs to the archaeal adenylate kinase family. As to quaternary structure, monomer.

Its subcellular location is the cytoplasm. It catalyses the reaction AMP + ATP = 2 ADP. In Methanococcus maripaludis (strain C6 / ATCC BAA-1332), this protein is Adenylate kinase.